Consider the following 158-residue polypeptide: uncharacterized protein (158 aa).

Transmembrane regions (helical) follow at residues 12-32, 39-59, 90-110, and 113-133; these read IITLIIFVAWLFVLILIAVVV, LDILFGWMLPLPFAVLNSLSV, LIYLIPVIISFVVTPSIFNTI, and IISTLFFPILNLVLSFVWLPL.

The protein resides in the cell membrane. This is an uncharacterized protein from Mycoplasma genitalium (strain ATCC 33530 / DSM 19775 / NCTC 10195 / G37) (Mycoplasmoides genitalium).